A 93-amino-acid polypeptide reads, in one-letter code: Small ribosomal subunit protein uS19 (93 aa).

This sequence belongs to the universal ribosomal protein uS19 family.

Protein S19 forms a complex with S13 that binds strongly to the 16S ribosomal RNA. In Geobacter metallireducens (strain ATCC 53774 / DSM 7210 / GS-15), this protein is Small ribosomal subunit protein uS19.